The primary structure comprises 102 residues: Large ribosomal subunit protein bL21 (102 aa).

Residues 77–88 show a composition bias toward basic residues; sequence KPKKHTHTKQGH. Positions 77–102 are disordered; it reads KPKKHTHTKQGHRQPYTKVTINKINA. The span at 93–102 shows a compositional bias: polar residues; sequence TKVTINKINA.

The protein belongs to the bacterial ribosomal protein bL21 family. In terms of assembly, part of the 50S ribosomal subunit. Contacts protein L20.

Functionally, this protein binds to 23S rRNA in the presence of protein L20. The chain is Large ribosomal subunit protein bL21 from Limosilactobacillus reuteri (strain DSM 20016) (Lactobacillus reuteri).